Here is a 191-residue protein sequence, read N- to C-terminus: Protein hugin (191 aa).

Residues 1 to 24 form the signal peptide; sequence MCGPSYCTLLLIAASCYILVCSHA. Residues 25–119 constitute a propeptide that is removed on maturation; sequence KSLQGTSKLD…LTYYLLLQKL (95 aa). Leucine amide occurs at positions 137 and 181. A propeptide spanning residues 185–191 is cleaved from the precursor; that stretch reads AQVCGGD.

This sequence belongs to the pyrokinin family. In terms of tissue distribution, expressed in a subgroup of neurosecretory cells in the subesophageal ganglion from embryonic stage 9 to larval stages.

It is found in the secreted. Functionally, probably has a role in larval molting. This is Protein hugin (Hug) from Drosophila melanogaster (Fruit fly).